A 785-amino-acid polypeptide reads, in one-letter code: Transcription factor Sp1 (785 aa).

Residues 1 to 93 (MSDQDHSMDE…PSQSGGTGEL (93 aa)) form a disordered region. Ser2 is subject to N-acetylserine. A phosphoserine mark is found at Ser2 and Ser7. Residues 2 to 82 (SDQDHSMDEM…SPNENSNNSQ (81 aa)) form a repressor domain region. Lys16 is covalently cross-linked (Glycyl lysine isopeptide (Lys-Gly) (interchain with G-Cter in SUMO); alternate). Lys16 participates in a covalent cross-link: Glycyl lysine isopeptide (Lys-Gly) (interchain with G-Cter in SUMO2); alternate. Residues 20–34 (GVGGNNGGNGNGGGA) are compositionally biased toward gly residues. The residue at position 59 (Ser59) is a Phosphoserine. Residues 72-85 (ESPNENSNNSQGPS) are compositionally biased toward low complexity. At Ser101 the chain carries Phosphoserine; by ATM. Positions 109 to 123 (IISSSSGATPTSKEQ) are enriched in polar residues. A disordered region spans residues 109–141 (IISSSSGATPTSKEQSGSSTNGSNGSESSKNRT). Over residues 124–136 (SGSSTNGSNGSES) the composition is skewed to low complexity. The transactivation domain A (Gln-rich) stretch occupies residues 146–251 (QYVVAAAPNL…ANNVLSGQTQ (106 aa)). Residues 261 to 495 (NGNITLLPVN…PMQGVSLGQT (235 aa)) form a transactivation domain B (Gln-rich) region. Thr278 is modified (phosphothreonine; by MAPK8). The interval 329–395 (TTTTTSNMGI…KEGEQNQQTQ (67 aa)) is disordered. Low complexity predominate over residues 342–357 (TTSGSSGTNSQGQTPQ). Over residues 358–379 (RVSGLQGSDALNIQQNQTSGGS) the composition is skewed to polar residues. The span at 381 to 395 (QAGQQKEGEQNQQTQ) shows a compositional bias: low complexity. At Thr453 the chain carries Phosphothreonine; by MAPK1 and MAPK3. Residues 462 to 470 (VSWQTLQLQ) carry the 9aaTAD motif. O-linked (GlcNAc) serine glycosylation occurs at Ser491. The segment at 496–610 (SSSNTTLTPI…REACTCPYCK (115 aa)) is transactivation domain C (highly charged). Positions 567 to 598 (LHGAGGDGIHDDTAGGEEGENSPDAQPQAGRR) are disordered. At Ser612 the chain carries Phosphoserine; alternate. O-linked (GlcNAc) serine; alternate glycosylation occurs at Ser612. The tract at residues 619 to 785 (DPGKKKQHIC…QSINISGNGF (167 aa)) is VZV IE62-binding. The C2H2-type 1 zinc finger occupies 626 to 650 (HICHIQGCGKVYGKTSHLRAHLRWH). Thr640 carries the post-translational modification Phosphothreonine; alternate. Residue Thr640 is glycosylated (O-linked (GlcNAc) threonine; alternate). Residue Ser641 is glycosylated (O-linked (GlcNAc) serine; alternate). The residue at position 641 (Ser641) is a Phosphoserine; by PKC/PRKCZ; alternate. Thr651 is subject to Phosphothreonine; by PKC/PRKCZ. The segment at 656–680 (FMCTWSYCGKRFTRSDELQRHKRTH) adopts a C2H2-type 2 zinc-finger fold. Thr668 carries the phosphothreonine modification. At Ser670 the chain carries Phosphoserine; by PKC/PRKCZ. Residue Thr681 is modified to Phosphothreonine; by PKC/PRKCZ. The segment at 686–708 (FACPECPKRFMRSDHLSKHIKTH) adopts a C2H2-type 3 zinc-finger fold. Phosphoserine; alternate is present on residues Ser698 and Ser702. 2 O-linked (GlcNAc) serine; alternate glycosylation sites follow: Ser698 and Ser702. The residue at position 703 (Lys703) is an N6-acetyllysine. Residues 708–785 (HQNKKGGPGV…QSINISGNGF (78 aa)) are domain D. Residue Thr739 is modified to Phosphothreonine; by MAPK1, MAPK3 and MAPK8.

It belongs to the Sp1 C2H2-type zinc-finger protein family. In terms of assembly, interacts with ATF7IP, ATF7IP2, BAHD1, POGZ, HCFC1, AATF and PHC2. Interacts with HLTF; the interaction may be required for basal transcriptional activity of HLTF. Interacts (deacetylated form) with EP300; the interaction enhances gene expression. Interacts with HDAC1 and JUN. Interacts with ELF1; the interaction is inhibited by glycosylation of SP1. Interaction with NFYA; the interaction is inhibited by glycosylation of SP1. Interacts with ATF7IP and TBP. Interacts with MEIS2 isoform 4 and PBX1 isoform PBX1a. Interacts with EGR1. Interacts with SMARCA4/BRG1. Interacts with RNF112 in an oxidative stress-regulated manner. Interacts with ZBTB7A; ZBTB7A prevents the binding to GC-rich motifs in promoters and represses the transcriptional activity of SP1. Interacts with DDX3X; this interaction potentiates SP1-induced CDKN1A/WAF1/CIP1 transcription. Interacts with MSX1; the interaction may inhibit MSX1 autoinactivation. As to quaternary structure, (Microbial infection) Interacts with varicella-zoster virus IE62 protein. (Microbial infection) Interacts with SV40 VP2/3 proteins. Interacts with SV40 major capsid protein VP1; this interaction leads to a cooperativity between the 2 proteins in DNA binding. In terms of assembly, (Microbial infection) Interacts with HIV-1 Vpr; the interaction is inhibited by SP1 O-glycosylation. Post-translationally, phosphorylated on multiple serine and threonine residues. Phosphorylation is coupled to ubiquitination, sumoylation and proteolytic processing. Phosphorylation on Ser-59 enhances proteolytic cleavage. Phosphorylation on Ser-7 enhances ubiquitination and protein degradation. Hyperphosphorylation on Ser-101 in response to DNA damage has no effect on transcriptional activity. MAPK1/MAPK3-mediated phosphorylation on Thr-453 and Thr-739 enhances VEGF transcription but, represses FGF2-triggered PDGFR-alpha transcription. Also implicated in the repression of RECK by ERBB2. Hyperphosphorylated on Thr-278 and Thr-739 during mitosis by MAPK8 shielding SP1 from degradation by the ubiquitin-dependent pathway. Phosphorylated in the zinc-finger domain by calmodulin-activated PKCzeta. Phosphorylation on Ser-641 by PKCzeta is critical for TSA-activated LHR gene expression through release of its repressor, p107. Phosphorylation on Thr-668, Ser-670 and Thr-681 is stimulated by angiotensin II via the AT1 receptor inducing increased binding to the PDGF-D promoter. This phosphorylation is increased in injured artey wall. Ser-59 and Thr-681 can both be dephosphorylated by PP2A during cell-cycle interphase. Dephosphorylation on Ser-59 leads to increased chromatin association during interphase and increases the transcriptional activity. On insulin stimulation, sequentially glycosylated and phosphorylated on several C-terminal serine and threonine residues. In terms of processing, acetylated. Acetylation/deacetylation events affect transcriptional activity. Deacetylation leads to an increase in the expression of the 12(s)-lipooxygenase gene through recruitment of p300 to the promoter. Deacetylated by HDAC6 which leads to increased expression of ENG and positive regulation of angiogenesis. Ubiquitinated. Ubiquitination occurs on the C-terminal proteolytically-cleaved peptide and is triggered by phosphorylation. Post-translationally, sumoylated with SUMO1. Sumoylation modulates proteolytic cleavage of the N-terminal repressor domain. Sumoylation levels are attenuated during tumorigenesis. Phosphorylation mediates SP1 desumoylation. In terms of processing, proteolytic cleavage in the N-terminal repressor domain is prevented by sumoylation. The C-terminal cleaved product is susceptible to degradation. O-glycosylated; Contains 8 N-acetylglucosamine side chains. Levels are controlled by insulin and the SP1 phosphorylation states. Insulin-mediated O-glycosylation locates SP1 to the nucleus, where it is sequentially deglycosylated and phosphorylated. O-glycosylation affects transcriptional activity through disrupting the interaction with a number of transcription factors including ELF1 and NFYA. Also inhibits interaction with the HIV1 promoter. Inhibited by peroxisomome proliferator receptor gamma (PPARgamma). In terms of tissue distribution, up-regulated in adenocarcinomas of the stomach (at protein level). Isoform 3 is ubiquitously expressed at low levels.

It localises to the nucleus. The protein localises to the cytoplasm. Functionally, transcription factor that can activate or repress transcription in response to physiological and pathological stimuli. Binds with high affinity to GC-rich motifs and regulates the expression of a large number of genes involved in a variety of processes such as cell growth, apoptosis, differentiation and immune responses. Highly regulated by post-translational modifications (phosphorylations, sumoylation, proteolytic cleavage, glycosylation and acetylation). Also binds the PDGFR-alpha G-box promoter. May have a role in modulating the cellular response to DNA damage. Implicated in chromatin remodeling. Plays an essential role in the regulation of FE65 gene expression. In complex with ATF7IP, maintains telomerase activity in cancer cells by inducing TERT and TERC gene expression. Isoform 3 is a stronger activator of transcription than isoform 1. Positively regulates the transcription of the core clock component BMAL1. Plays a role in the recruitment of SMARCA4/BRG1 on the c-FOS promoter. Plays a role in protecting cells against oxidative stress following brain injury by regulating the expression of RNF112. The sequence is that of Transcription factor Sp1 (SP1) from Homo sapiens (Human).